Consider the following 414-residue polypeptide: tRNA(Ile)-lysidine synthase (414 aa).

ATP is bound at residue 13-18 (SGGIDS).

The protein belongs to the tRNA(Ile)-lysidine synthase family.

It localises to the cytoplasm. It catalyses the reaction cytidine(34) in tRNA(Ile2) + L-lysine + ATP = lysidine(34) in tRNA(Ile2) + AMP + diphosphate + H(+). Its function is as follows. Ligates lysine onto the cytidine present at position 34 of the AUA codon-specific tRNA(Ile) that contains the anticodon CAU, in an ATP-dependent manner. Cytidine is converted to lysidine, thus changing the amino acid specificity of the tRNA from methionine to isoleucine. This is tRNA(Ile)-lysidine synthase from Thermotoga maritima (strain ATCC 43589 / DSM 3109 / JCM 10099 / NBRC 100826 / MSB8).